A 2571-amino-acid chain; its full sequence is Highly reducing polyketide synthase 19 (2571 aa).

A disordered region spans residues Met-1–Pro-51. Over residues Leu-27–Ser-38 the composition is skewed to polar residues. The 435-residue stretch at Pro-51–Ser-485 folds into the Ketosynthase family 3 (KS3) domain. Active-site for beta-ketoacyl synthase activity residues include Cys-224, His-359, and His-398. Residues Val-609 to Lys-932 are malonyl-CoA:ACP transacylase (MAT) domain. The active-site For malonyltransferase activity is Ser-701. Residues His-1019–Asp-1163 form an N-terminal hotdog fold region. The dehydratase (DH) domain stretch occupies residues His-1019–Ser-1340. The 326-residue stretch at His-1019–Val-1344 folds into the PKS/mFAS DH domain. Catalysis depends on His-1051, which acts as the Proton acceptor; for dehydratase activity. A C-terminal hotdog fold region spans residues Met-1177 to Val-1344. Asp-1241 functions as the Proton donor; for dehydratase activity in the catalytic mechanism. An enoyl reductase (ER) domain region spans residues Asn-1800–Thr-2140. The interval Ser-2177–Ser-2355 is ketoreductase (KR) domain. The Carrier domain occupies Ala-2490 to Leu-2568. At Ser-2527 the chain carries O-(pantetheine 4'-phosphoryl)serine.

It functions in the pathway polyketide biosynthesis. In terms of biological role, highly reducing polyketide synthase; part of the gene cluster that mediates the biosynthesis of pyriculol and pyriculariol, two heptaketides that induce lesion formation upon application on rice leaves but are dispensable for pathogenicity. The highly reducing polyketide synthase synthesizes the heptaketide backbone of pyriculol and pyriculariol. Pyriculol and pyriculariol contain several hydroxyl moieties and double bonds, so it can be assumed that several reduction steps occur during biosynthesis. These reactions could be executed by PKS19 itself or partly by the tailoring enzymes OXR1, PXR2, RED1, RED2 or RED3, identified within the cluster. The FAD-linked oxidoreductase OXR1 is the only tailoring enzyme for which the function has been determined yet, and is involved in the oxidation of dihydropyriculol and dihydropyriculariol into pyriculol and pyriculariol, respectively. This Pyricularia oryzae (strain 70-15 / ATCC MYA-4617 / FGSC 8958) (Rice blast fungus) protein is Highly reducing polyketide synthase 19.